A 121-amino-acid polypeptide reads, in one-letter code: UPF0344 protein BCA_1194 (121 aa).

4 consecutive transmembrane segments (helical) span residues 6-26, 38-58, 65-85, and 92-112; these read ITAWALGLILFFVAYSLYSAG, LMYIIIIVTGFMLYMGIMKTA, WYGLKMVAGILVIGGMEMVLV, and ATGAVWGLFIVALVAVFYLGL.

Belongs to the UPF0344 family.

The protein localises to the cell membrane. The chain is UPF0344 protein BCA_1194 from Bacillus cereus (strain 03BB102).